Here is a 611-residue protein sequence, read N- to C-terminus: MWTHPISYDVIVVGAGHAGCEAAFCSAKMGASVLILTSNLDTIAKLSCNPAVGGIGKGHIVREIDALGGIMAEITDRSGIQFRILNQTKGPAVRAPRAQVDKQMYHIHMKRLLESTPGLHIMQGTVESLLDKENVIQGVTTKEGIAYLGKTVILSSGTFMRGLIHIGDRSFSGGRLGDPAATGLSAALKERGFPISRLKTGTPPRLLASSIDFSVTEEQPGDPGVGFVHRDEPFVPPLPQVSCYITHTTEKTKEIITANIRRSALYGGRIEGIGPRYCPSIEDKIVKFADKERHHIFIEPEGIYTQEVYVNGLSTSMPFDVQYEMIRSVRGLENAIITRPAYAIEYDYVHGNVIYPTLESKTIEGLFLCGQINGTTGYEEAAAQGLIAGINAVNKVLRKPDFIPSRQESYIGVMLDDLTTQVLDEPYRMFTGRAEHRLLLRQDNACLRLSHYGRDLGLLSKERYELFEHQKQIIEEEKLRLSKTFKKYGNSVVSLAKALCRPEVSYDTLREVFPEEVRDFGSILNASLEMEIKYAGYIERQKSLIHSLSKSENMTIPEDIDYQSISSLSLEAREKLAKFTPRTIGSASRISGIANADIQVLMVAVKKHAHK.

14–19 (GAGHAG) provides a ligand contact to FAD. 274–288 (GPRYCPSIEDKIVKF) is an NAD(+) binding site.

This sequence belongs to the MnmG family. In terms of assembly, homodimer. Heterotetramer of two MnmE and two MnmG subunits. Requires FAD as cofactor.

The protein resides in the cytoplasm. In terms of biological role, NAD-binding protein involved in the addition of a carboxymethylaminomethyl (cmnm) group at the wobble position (U34) of certain tRNAs, forming tRNA-cmnm(5)s(2)U34. The protein is tRNA uridine 5-carboxymethylaminomethyl modification enzyme MnmG of Chlamydia felis (strain Fe/C-56) (Chlamydophila felis).